The chain runs to 352 residues: B1 bradykinin receptor (352 aa).

Over 1–41 the chain is Extracellular; that stretch reads MASWPPLELQSSNQSQLFPQNATACDNAPEAWDLLHRVLPT. N-linked (GlcNAc...) asparagine glycosylation is found at Asn-13 and Asn-21. Residues 42-62 traverse the membrane as a helical segment; sequence FIISICSFGLLGNLFVLLVFL. Over 63 to 72 the chain is Cytoplasmic; that stretch reads LPRRRLNVAE. A helical membrane pass occupies residues 73-93; the sequence is IYLANLAASDLVFVLGLPFWA. The Extracellular portion of the chain corresponds to 94 to 110; the sequence is ENIWNQFNWPFGALLCR. Cys-109 and Cys-188 are joined by a disulfide. The chain crosses the membrane as a helical span at residues 111–131; that stretch reads GINGVIKANLFISIFLVVAIS. Over 132 to 153 the chain is Cytoplasmic; that stretch reads QDRYCLLVHPMASRRRQRRRQA. The chain crosses the membrane as a helical span at residues 154–174; sequence RVTCVLIWVVGGLLSIPTFLL. The Extracellular segment spans residues 175-206; it reads RSIQAVPDLNITACILLLPHEAWHFARIVELN. Asn-184 is a glycosylation site (N-linked (GlcNAc...) asparagine). A helical membrane pass occupies residues 207-227; the sequence is ILAFLLPLAAIVFFNYHILAS. Residues 228-250 lie on the Cytoplasmic side of the membrane; the sequence is LRGREEVSRTRCGGRKDSKTTAL. A helical membrane pass occupies residues 251–271; that stretch reads ILTLVVAFLVCWAPYHFFAFL. The Extracellular portion of the chain corresponds to 272-294; the sequence is EFLFQVQAIRSCFWEDFIDLGLQ. A helical transmembrane segment spans residues 295-315; sequence LANFLAFTNSSLNPVIYVFVG. Topologically, residues 316-352 are cytoplasmic; the sequence is RLFRTKVWELYKQCTPKSLAPISSSHRKEIFQLFWRN. Cys-329 carries the S-palmitoyl cysteine lipid modification.

Belongs to the G-protein coupled receptor 1 family. Bradykinin receptor subfamily. BDKRB1 sub-subfamily.

It is found in the cell membrane. Its function is as follows. This is a receptor for bradykinin. Could be a factor in chronic pain and inflammation. The polypeptide is B1 bradykinin receptor (BDKRB1) (Chlorocebus pygerythrus (Vervet monkey)).